A 183-amino-acid polypeptide reads, in one-letter code: Lipocalin (183 aa).

An N-terminal signal peptide occupies residues 1–20 (MKGLVLSFALVALSALCVYG). Cys-83 and Cys-179 are disulfide-bonded.

This sequence belongs to the calycin superfamily. Lipocalin family. As to quaternary structure, monomer. Expressed mainly in choroid plexus. Much lower expression in other brain areas, and absent from liver.

The protein resides in the secreted. Might have a transport function across the blood brain barrier. Is supposed to have similar functions as a transthyretin which must have evolved after the stage of the amphibians in evolution. This is Lipocalin from Rhinella marina (Cane toad).